The following is a 481-amino-acid chain: Phosphoenolpyruvate phosphatase (481 aa).

A signal peptide spans 1 to 36 (MPIYTSRSCFYLLLFHIILLCSVDKTLCRQTSSFVR). N109 carries an N-linked (GlcNAc...) asparagine glycan. Fe cation is bound by residues D168, D195, and Y198. D195 contributes to the Zn(2+) binding site. The N-linked (GlcNAc...) asparagine glycan is linked to N206. The Zn(2+) site is built by N232 and H317. N232 serves as a coordination point for substrate. Catalysis depends on H327, which acts as the Proton donor. H354 is a Zn(2+) binding site. 354-356 (HVH) serves as a coordination point for substrate. H356 is a binding site for Fe cation. N-linked (GlcNAc...) asparagine glycosylation is found at N370 and N427.

This sequence belongs to the metallophosphoesterase superfamily. Purple acid phosphatase family.

The protein resides in the vacuole lumen. The enzyme catalyses phosphoenolpyruvate + H2O = pyruvate + phosphate. Phosphoenolpyruvate phosphatase that probably operates in the vacuole to release phosphate from phosphoenolpyruvate (PEP) under phosphorus starvation. The protein is Phosphoenolpyruvate phosphatase (ACPEPP) of Allium cepa (Onion).